Reading from the N-terminus, the 405-residue chain is MFSLKALLPLALLLVSANQVAAKVHKAKIYKHELSDEMKEVTFEQHLAHLGQKYLTQFEKANPEVVFSREHPFFTEGGHDVPLTNYLNAQYYTDITLGTPPQNFKVILDTGSSNLWVPSNECGSLACFLHSKYDHEASSSYKANGTEFAIQYGTGSLEGYISQDTLSIGDLTIPKQDFAEATSEPGLTFAFGKFDGILGLGYDTISVDKVVPPFYNAIQQDLLDEKRFAFYLGDTSKDTENGGEATFGGIDESKFKGDITWLPVRRKAYWEVKFEGIGLGDEYAELESHGAAIDTGTSLITLPSGLAEMINAEIGAKKGWTGQYTLDCNTRDNLPDLIFNFNGYNFTIGPYDYTLEVSGSCISAITPMDFPEPVGPLAIVGDAFLRKYYSIYDLGNNAVGLAKAI.

Positions 1–22 (MFSLKALLPLALLLVSANQVAA) are cleaved as a signal peptide. Positions 23–76 (KVHKAKIYKHELSDEMKEVTFEQHLAHLGQKYLTQFEKANPEVVFSREHPFFTE) are cleaved as a propeptide — activation peptide. In terms of domain architecture, Peptidase A1 spans 91 to 402 (YYTDITLGTP…DLGNNAVGLA (312 aa)). Residue Asp109 is part of the active site. Cys122 and Cys127 are joined by a disulfide. The N-linked (GlcNAc...) asparagine glycan is linked to Asn144. The active site involves Asp294. A disulfide bridge links Cys328 with Cys361. Asn345 carries N-linked (GlcNAc...) asparagine glycosylation.

Belongs to the peptidase A1 family.

The protein resides in the vacuole. It catalyses the reaction Hydrolysis of proteins with broad specificity for peptide bonds. Cleaves -Leu-Leu-|-Val-Tyr- bond in a synthetic substrate. Does not act on esters of Tyr or Arg.. Its function is as follows. Aspartyl protease implicated in the post-translational regulation of S.cerevisiae vacuolar proteinases. Acts on YSCB, on YSCY and on itself. The polypeptide is Saccharopepsin (PEP4) (Saccharomyces cerevisiae (strain ATCC 204508 / S288c) (Baker's yeast)).